Reading from the N-terminus, the 885-residue chain is DNA mismatch repair protein MutS (885 aa).

626–633 (GPNMGGKS) serves as a coordination point for ATP.

Belongs to the DNA mismatch repair MutS family.

In terms of biological role, this protein is involved in the repair of mismatches in DNA. It is possible that it carries out the mismatch recognition step. This protein has a weak ATPase activity. This chain is DNA mismatch repair protein MutS, found in Burkholderia ambifaria (strain MC40-6).